Here is a 348-residue protein sequence, read N- to C-terminus: Rhodopsin (348 aa).

Met-1 carries the N-acetylmethionine modification. Over 1–36 the chain is Extracellular; sequence MNGTEGPNFYVPFSNATGVVRSPFEYPQYYLAEPWQ. N-linked (GlcNAc...) asparagine glycosylation is found at Asn-2 and Asn-15. A helical membrane pass occupies residues 37–61; the sequence is FSMLAAYMFLLIVLGFPINFLTLYV. The Cytoplasmic segment spans residues 62–73; sequence TVQHKKLRTPLN. A helical membrane pass occupies residues 74–96; it reads YILLNLAVADLFMVLGGFTSTLY. Over 97–110 the chain is Extracellular; sequence TSLHGYFVFGPTGC. Cysteines 110 and 187 form a disulfide. The helical transmembrane segment at 111 to 133 threads the bilayer; the sequence is NLEGFFATLGGEIALWSLVVLAI. A 'Ionic lock' involved in activated form stabilization motif is present at residues 134–136; that stretch reads ERY. Over 134 to 152 the chain is Cytoplasmic; the sequence is ERYVVVCKPMSNFRFGENH. Residues 153-173 traverse the membrane as a helical segment; it reads AIMGVAFTWVMALACAAPPLA. The Extracellular segment spans residues 174-202; it reads GWSRYIPEGLQCSCGIDYYTLKPEVNNES. Glu-201 provides a ligand contact to Zn(2+). The chain crosses the membrane as a helical span at residues 203 to 224; that stretch reads FVIYMFVVHFTIPMIIIFFCYG. Topologically, residues 225–252 are cytoplasmic; it reads QLVFTVKEAAAQQQESATTQKAEKEVTR. A helical membrane pass occupies residues 253–274; it reads MVIIMVIAFLICWVPYASVAFY. At 275–284 the chain is on the extracellular side; that stretch reads IFTHQGSNFG. Position 279 (Gln-279) interacts with Zn(2+). A helical transmembrane segment spans residues 285-309; sequence PIFMTIPAFFAKSAAIYNPVIYIMM. An N6-(retinylidene)lysine modification is found at Lys-296. Residues 310-348 lie on the Cytoplasmic side of the membrane; that stretch reads NKQFRNCMLTTICCGKNPLGDDEASATVSKTETSQVAPA. S-palmitoyl cysteine attachment occurs at residues Cys-322 and Cys-323. Residues 330–348 are interaction with SAG; the sequence is DDEASATVSKTETSQVAPA. Ser-334 is modified (phosphoserine). Phosphothreonine is present on Thr-336. The residue at position 338 (Ser-338) is a Phosphoserine. Phosphothreonine occurs at positions 340 and 342. A Phosphoserine modification is found at Ser-343.

The protein belongs to the G-protein coupled receptor 1 family. Opsin subfamily. In terms of assembly, homodimer. May form a complex composed of RHO, GRK1 and RCVRN in a Ca(2+)-dependent manner; RCVRN prevents the interaction between GRK1 and RHO. Interacts with GRK1. Interacts (phosphorylated form) with SAG. Interacts with GNAT1. Interacts with GNAT3. SAG and G-proteins compete for a common binding site. Interacts with PRCD; the interaction promotes PRCD stability. Forms a complex with ASAP1 and ARF4. Forms a complex with ASAP1, RAB11A, Rabin8/RAB3IP, ARF4 and RAB11FIP3; the complex regulates Golgi-to-cilia rhodopsin/RHO transport in photoreceptors. Phosphorylated on some or all of the serine and threonine residues present in the C-terminal region. After activation by light, phosphorylated by GRK1 (in vitro). In terms of processing, contains one covalently linked retinal chromophore. Upon light absorption, the covalently bound 11-cis-retinal is converted to all-trans-retinal. After hydrolysis of the Schiff base and release of the covalently bound all-trans-retinal, active rhodopsin is regenerated by binding of a fresh molecule of 11-cis-retinal. As to expression, rod shaped photoreceptor cells which mediate vision in dim light.

It is found in the membrane. The protein resides in the cell projection. The protein localises to the cilium. Its subcellular location is the photoreceptor outer segment. Functionally, photoreceptor required for image-forming vision at low light intensity. Required for photoreceptor cell viability after birth. Light-induced isomerization of the chromophore 11-cis-retinal to all-trans-retinal triggers a conformational change that activates signaling via G-proteins. Subsequent receptor phosphorylation mediates displacement of the bound G-protein alpha subunit by the arrestin SAG and terminates signaling. This chain is Rhodopsin (RHO), found in Homo sapiens (Human).